Consider the following 274-residue polypeptide: Large ribosomal subunit protein uL2cz/uL2cy (274 aa).

Disordered regions lie at residues 1 to 21 (MAIHLYKTSTPSTRNGAVDSQ) and 224 to 274 (NPVD…RRSK).

The protein belongs to the universal ribosomal protein uL2 family. Part of the 50S ribosomal subunit.

Its subcellular location is the plastid. It is found in the chloroplast. This chain is Large ribosomal subunit protein uL2cz/uL2cy (rpl2-A), found in Populus trichocarpa (Western balsam poplar).